Reading from the N-terminus, the 776-residue chain is Disintegrin and metalloproteinase domain-containing protein 7 (776 aa).

A signal peptide spans 1–23 (MLPGCIFLMILLILQVKEKVILG). Residues 24–176 (VEGQQLVYPK…NYSCTELNFT (153 aa)) constitute a propeptide that is removed on maturation. Residues 26-669 (GQQLVYPKKL…WEETLNVTNV (644 aa)) lie on the Extracellular side of the membrane. Asparagine 84, asparagine 167, and asparagine 174 each carry an N-linked (GlcNAc...) asparagine glycan. A Peptidase M12B domain is found at 199 to 394 (KYIELFIVAD…YKPTCMLNIP (196 aa)). Cystine bridges form between cysteine 310–cysteine 389, cysteine 350–cysteine 373, cysteine 352–cysteine 357, and cysteine 460–cysteine 480. The Disintegrin domain occupies 402–488 (FQFCGNKKLD…ACPKDQFRVN (87 aa)). Asparagine 584, asparagine 629, and asparagine 665 each carry an N-linked (GlcNAc...) asparagine glycan. Residues 670–690 (AILIVVLVLVIVGIGVLILLI) traverse the membrane as a helical segment. The Cytoplasmic segment spans residues 691–776 (RYQKCIKLKQ…GIADPNQSAK (86 aa)). Positions 757–776 (TLKPASKDSRGIADPNQSAK) are disordered.

Interacts with ITM2B in sperm; the interaction increases following capacitation. Interacts with HSPA5 and CANX.

It is found in the membrane. Its function is as follows. Required for normal male fertility via maintenance of epithelial cell morphology in the caput epididymis and subsequently correct epididymis lumen structure required for sperm development. Plays a role in sperm motility, flagella morphology and tyrosine phosphorylation during sperm capacitance. Plays a role in normal expression levels of HSPA5, ITM2B and ADAM2 in sperm both prior to and post-capacitation. This is a non catalytic metalloprotease-like protein. The polypeptide is Disintegrin and metalloproteinase domain-containing protein 7 (ADAM7) (Macaca fascicularis (Crab-eating macaque)).